The sequence spans 247 residues: 5-oxoprolinase subunit A 1 (247 aa).

It belongs to the LamB/PxpA family. Forms a complex composed of PxpA, PxpB and PxpC.

The catalysed reaction is 5-oxo-L-proline + ATP + 2 H2O = L-glutamate + ADP + phosphate + H(+). In terms of biological role, catalyzes the cleavage of 5-oxoproline to form L-glutamate coupled to the hydrolysis of ATP to ADP and inorganic phosphate. The sequence is that of 5-oxoprolinase subunit A 1 from Ralstonia nicotianae (strain ATCC BAA-1114 / GMI1000) (Ralstonia solanacearum).